The following is a 154-amino-acid chain: Myoglobin (154 aa).

The region spanning 2 to 148 (VLSEGEWQLV…FRKDIAAKYK (147 aa)) is the Globin domain. Position 4 is a phosphoserine (serine 4). A nitrite-binding site is contributed by histidine 65. Histidine 65 provides a ligand contact to O2. At threonine 68 the chain carries Phosphothreonine. Histidine 94 contributes to the heme b binding site.

The protein belongs to the globin family. Monomeric.

The protein resides in the cytoplasm. It localises to the sarcoplasm. The catalysed reaction is Fe(III)-heme b-[protein] + nitric oxide + H2O = Fe(II)-heme b-[protein] + nitrite + 2 H(+). It carries out the reaction H2O2 + AH2 = A + 2 H2O. Its function is as follows. Monomeric heme protein which primary function is to store oxygen and facilitate its diffusion within muscle tissues. Reversibly binds oxygen through a pentacoordinated heme iron and enables its timely and efficient release as needed during periods of heightened demand. Depending on the oxidative conditions of tissues and cells, and in addition to its ability to bind oxygen, it also has a nitrite reductase activity whereby it regulates the production of bioactive nitric oxide. Under stress conditions, like hypoxia and anoxia, it also protects cells against reactive oxygen species thanks to its pseudoperoxidase activity. This chain is Myoglobin (MB), found in Kogia breviceps (Pygmy sperm whale).